We begin with the raw amino-acid sequence, 484 residues long: Protein nucleotidyltransferase YdiU (484 aa).

Residues Gly81, Gly83, Arg84, Lys103, Asp115, Gly116, Arg166, and Arg173 each coordinate ATP. Asp244 functions as the Proton acceptor in the catalytic mechanism. Positions 245 and 254 each coordinate Mg(2+). Asp254 is an ATP binding site.

The protein belongs to the SELO family. It depends on Mg(2+) as a cofactor. Requires Mn(2+) as cofactor.

The catalysed reaction is L-seryl-[protein] + ATP = 3-O-(5'-adenylyl)-L-seryl-[protein] + diphosphate. It carries out the reaction L-threonyl-[protein] + ATP = 3-O-(5'-adenylyl)-L-threonyl-[protein] + diphosphate. It catalyses the reaction L-tyrosyl-[protein] + ATP = O-(5'-adenylyl)-L-tyrosyl-[protein] + diphosphate. The enzyme catalyses L-histidyl-[protein] + UTP = N(tele)-(5'-uridylyl)-L-histidyl-[protein] + diphosphate. The catalysed reaction is L-seryl-[protein] + UTP = O-(5'-uridylyl)-L-seryl-[protein] + diphosphate. It carries out the reaction L-tyrosyl-[protein] + UTP = O-(5'-uridylyl)-L-tyrosyl-[protein] + diphosphate. In terms of biological role, nucleotidyltransferase involved in the post-translational modification of proteins. It can catalyze the addition of adenosine monophosphate (AMP) or uridine monophosphate (UMP) to a protein, resulting in modifications known as AMPylation and UMPylation. This chain is Protein nucleotidyltransferase YdiU, found in Shewanella baltica (strain OS155 / ATCC BAA-1091).